A 60-amino-acid polypeptide reads, in one-letter code: Large ribosomal subunit protein bL32 (60 aa).

Disordered stretches follow at residues 1–22 (MAVQQNKKSPSKRGMHRSHNAL) and 34–60 (GETHLRHHISPNGFYRGRQVLKNKSEA). The span at 9-19 (SPSKRGMHRSH) shows a compositional bias: basic residues.

This sequence belongs to the bacterial ribosomal protein bL32 family.

This Variovorax paradoxus (strain S110) protein is Large ribosomal subunit protein bL32.